The chain runs to 215 residues: Protein-L-isoaspartate O-methyltransferase (215 aa).

Ser-62 is an active-site residue.

The protein belongs to the methyltransferase superfamily. L-isoaspartyl/D-aspartyl protein methyltransferase family.

Its subcellular location is the cytoplasm. The enzyme catalyses [protein]-L-isoaspartate + S-adenosyl-L-methionine = [protein]-L-isoaspartate alpha-methyl ester + S-adenosyl-L-homocysteine. Its function is as follows. Catalyzes the methyl esterification of L-isoaspartyl residues in peptides and proteins that result from spontaneous decomposition of normal L-aspartyl and L-asparaginyl residues. It plays a role in the repair and/or degradation of damaged proteins. This is Protein-L-isoaspartate O-methyltransferase from Rhodopseudomonas palustris (strain BisA53).